A 299-amino-acid polypeptide reads, in one-letter code: Ribosomal protein L11 methyltransferase (299 aa).

S-adenosyl-L-methionine is bound by residues T140, G161, D183, and N232.

This sequence belongs to the methyltransferase superfamily. PrmA family.

The protein resides in the cytoplasm. It carries out the reaction L-lysyl-[protein] + 3 S-adenosyl-L-methionine = N(6),N(6),N(6)-trimethyl-L-lysyl-[protein] + 3 S-adenosyl-L-homocysteine + 3 H(+). Methylates ribosomal protein L11. This Synechococcus elongatus (strain ATCC 33912 / PCC 7942 / FACHB-805) (Anacystis nidulans R2) protein is Ribosomal protein L11 methyltransferase.